Consider the following 98-residue polypeptide: DNA-binding protein Fis (98 aa).

The H-T-H motif DNA-binding region spans 74–93; it reads QTRAALMLGINRSTLRKKLK.

The protein belongs to the transcriptional regulatory Fis family. As to quaternary structure, homodimer.

In terms of biological role, activates ribosomal RNA transcription. Plays a direct role in upstream activation of rRNA promoters. In Buchnera aphidicola subsp. Acyrthosiphon pisum (strain 5A), this protein is DNA-binding protein Fis.